We begin with the raw amino-acid sequence, 41 residues long: U15-myrmicitoxin-Tb1b (41 aa).

The N-terminal stretch at 1–25 (MKIVKLITIFAMIATLMVTVTNGEA) is a signal peptide. His-40 is modified (histidine amide).

Expressed by the venom gland.

It is found in the secreted. Its function is as follows. Venom protein with unknown function. Does not induce paralysis when a high dose is administered by intrathoracic injection into the blowfly Lucilia caesar. This chain is U15-myrmicitoxin-Tb1b, found in Tetramorium bicarinatum (Tramp ant).